A 232-amino-acid chain; its full sequence is Ubiquinone biosynthesis O-methyltransferase (232 aa).

The S-adenosyl-L-methionine site is built by Arg-36, Gly-55, Asp-76, and Met-120.

The protein belongs to the methyltransferase superfamily. UbiG/COQ3 family.

The enzyme catalyses a 3-demethylubiquinol + S-adenosyl-L-methionine = a ubiquinol + S-adenosyl-L-homocysteine + H(+). It carries out the reaction a 3-(all-trans-polyprenyl)benzene-1,2-diol + S-adenosyl-L-methionine = a 2-methoxy-6-(all-trans-polyprenyl)phenol + S-adenosyl-L-homocysteine + H(+). It functions in the pathway cofactor biosynthesis; ubiquinone biosynthesis. Functionally, O-methyltransferase that catalyzes the 2 O-methylation steps in the ubiquinone biosynthetic pathway. The sequence is that of Ubiquinone biosynthesis O-methyltransferase from Paraburkholderia xenovorans (strain LB400).